The primary structure comprises 117 residues: Large ribosomal subunit protein uL18 (117 aa).

It belongs to the universal ribosomal protein uL18 family. In terms of assembly, part of the 50S ribosomal subunit; part of the 5S rRNA/L5/L18/L25 subcomplex. Contacts the 5S and 23S rRNAs.

Functionally, this is one of the proteins that bind and probably mediate the attachment of the 5S RNA into the large ribosomal subunit, where it forms part of the central protuberance. The polypeptide is Large ribosomal subunit protein uL18 (Sphingopyxis alaskensis (strain DSM 13593 / LMG 18877 / RB2256) (Sphingomonas alaskensis)).